Consider the following 132-residue polypeptide: DNA-directed RNA polymerase subunit Rpo8 (132 aa).

Belongs to the archaeal Rpo8 RNA polymerase subunit family. As to quaternary structure, part of the 13-subunit RNA polymerase complex.

The protein localises to the cytoplasm. The catalysed reaction is RNA(n) + a ribonucleoside 5'-triphosphate = RNA(n+1) + diphosphate. In terms of biological role, DNA-dependent RNA polymerase (RNAP) catalyzes the transcription of DNA into RNA using the four ribonucleoside triphosphates as substrates. In Saccharolobus solfataricus (strain ATCC 35092 / DSM 1617 / JCM 11322 / P2) (Sulfolobus solfataricus), this protein is DNA-directed RNA polymerase subunit Rpo8.